Reading from the N-terminus, the 88-residue chain is Small ribosomal subunit protein bS20 (88 aa).

Residues 1 to 22 are disordered; the sequence is MANTPSAKKAVNKIAKRTQVNK.

The protein belongs to the bacterial ribosomal protein bS20 family.

Functionally, binds directly to 16S ribosomal RNA. This is Small ribosomal subunit protein bS20 from Bartonella bacilliformis (strain ATCC 35685 / KC583 / Herrer 020/F12,63).